Consider the following 416-residue polypeptide: MFGGHAPRRVSHAVDVRWGGTLVTIGGAAPVRVQSMTNTDTADAIGTAIQVKELANAGSELVRITVNTPEAAAAVPAIREQLDRMGVTVPLVGDFHYNGHLLLRDYPDCAQALSKYRINPGNVGQGAKRDSQFAQMIEAAIKYDKPVRIGVNWGSLDQDLLARMMDENGARAEPWEAQSVMYEALIQSAIGSAERAVELGLGRDKIVLSCKVSGVQDLVAVYRELSRRCGFALHLGLTEAGMGSKGIVASTAAIGLLLQEGIGDTIRISLTPEPGAPRTGEVVVGQEILQTMGLRSFAPMVVACPGCGRTTSTLFQELALRIQTYLREQMPVWRSEYPGVEKMNVAVMGCIVNGPGESKHANIGISLPGSGENPAAPVFVDGEKVKTLRGEHIAEEFQQIVSDYVARTYGRAAAQN.

Residues C304, C307, C350, and E357 each contribute to the [4Fe-4S] cluster site.

The protein belongs to the IspG family. [4Fe-4S] cluster is required as a cofactor.

It catalyses the reaction (2E)-4-hydroxy-3-methylbut-2-enyl diphosphate + oxidized [flavodoxin] + H2O + 2 H(+) = 2-C-methyl-D-erythritol 2,4-cyclic diphosphate + reduced [flavodoxin]. It participates in isoprenoid biosynthesis; isopentenyl diphosphate biosynthesis via DXP pathway; isopentenyl diphosphate from 1-deoxy-D-xylulose 5-phosphate: step 5/6. Its function is as follows. Converts 2C-methyl-D-erythritol 2,4-cyclodiphosphate (ME-2,4cPP) into 1-hydroxy-2-methyl-2-(E)-butenyl 4-diphosphate. The polypeptide is 4-hydroxy-3-methylbut-2-en-1-yl diphosphate synthase (flavodoxin) (Burkholderia pseudomallei (strain K96243)).